A 118-amino-acid polypeptide reads, in one-letter code: Light-harvesting protein B-800/850 gamma chain (118 aa).

In terms of biological role, seems to be required for the LH-II stabilization. This Rhodobacter capsulatus (Rhodopseudomonas capsulata) protein is Light-harvesting protein B-800/850 gamma chain (pucE).